Consider the following 92-residue polypeptide: uncharacterized protein (92 aa).

The helical transmembrane segment at 65-86 (AVWIFWLCFLVSGLSRAFLVYF) threads the bilayer.

The protein localises to the membrane. This is an uncharacterized protein from Treponema pallidum (strain Nichols).